The following is a 713-amino-acid chain: Calpain-1 catalytic subunit (713 aa).

One can recognise a Calpain catalytic domain in the interval 55–354 (LFQDEAFPPV…FTKLEICNLT (300 aa)). Positions 109 and 114 each coordinate Ca(2+). Catalysis depends on residues cysteine 115, histidine 272, and asparagine 296. Ca(2+) contacts are provided by aspartate 318 and glutamate 323. A Phosphothreonine modification is found at threonine 354. The segment at 355–525 (PDALKSRTLR…KKAGTQELDD (171 aa)) is domain III. Positions 526–541 (QIQANLPDEKVLSEEE) are linker. EF-hand domains follow at residues 540-575 (EEID…IISK), 584-617 (FSLE…NRIR), 614-649 (NRIR…AGFK), and 679-713 (VRLE…TMFA). Residues 542–712 (IDDNFKTLFS…LFKWLQLTMF (171 aa)) are domain IV. Aspartate 597, aspartate 599, asparagine 601, lysine 603, glutamate 608, aspartate 627, aspartate 629, serine 631, serine 633, and glutamate 638 together coordinate Ca(2+).

It belongs to the peptidase C2 family. Forms a heterodimer with a small (regulatory) subunit CAPNS1. Ca(2+) is required as a cofactor. Post-translationally, undergoes calcium-induced successive autoproteolytic cleavages that generate a membrane-bound 78 kDa active form and an intracellular 75 kDa active form. Calpastatin reduces with high efficiency the transition from 78 kDa to 75 kDa calpain forms.

The protein resides in the cytoplasm. The protein localises to the cell membrane. The enzyme catalyses Broad endopeptidase specificity.. Its activity is regulated as follows. Activated by micromolar concentrations of calcium and inhibited by calpastatin. Its function is as follows. Calcium-regulated non-lysosomal thiol-protease which catalyzes limited proteolysis of substrates involved in cytoskeletal remodeling and signal transduction. Proteolytically cleaves CTBP1 at 'Asn-375', 'Gly-388' and 'His-410'. Cleaves and activates caspase-7 (CASP7). The polypeptide is Calpain-1 catalytic subunit (Mus musculus (Mouse)).